The primary structure comprises 92 residues: Long neurotoxin 73 (92 aa).

Residues 1–21 (MKTLLLTLVVVTIVCLDLGDS) form the signal peptide. Disulfide bonds link Cys24–Cys41, Cys34–Cys62, Cys47–Cys51, Cys66–Cys77, and Cys78–Cys83.

The protein belongs to the three-finger toxin family. Long-chain subfamily. Type II alpha-neurotoxin sub-subfamily. In terms of tissue distribution, expressed by the venom gland.

Its subcellular location is the secreted. In terms of biological role, binds with high affinity to muscular (alpha-1/CHRNA1) and neuronal (alpha-7/CHRNA7) nicotinic acetylcholine receptor (nAChR) and inhibits acetylcholine from binding to the receptor, thereby impairing neuromuscular and neuronal transmission. In Drysdalia coronoides (White-lipped snake), this protein is Long neurotoxin 73.